We begin with the raw amino-acid sequence, 882 residues long: Alanine--tRNA ligase (882 aa).

Zn(2+) is bound by residues His-570, His-574, Cys-672, and His-676.

This sequence belongs to the class-II aminoacyl-tRNA synthetase family. Requires Zn(2+) as cofactor.

Its subcellular location is the cytoplasm. It catalyses the reaction tRNA(Ala) + L-alanine + ATP = L-alanyl-tRNA(Ala) + AMP + diphosphate. In terms of biological role, catalyzes the attachment of alanine to tRNA(Ala) in a two-step reaction: alanine is first activated by ATP to form Ala-AMP and then transferred to the acceptor end of tRNA(Ala). Also edits incorrectly charged Ser-tRNA(Ala) and Gly-tRNA(Ala) via its editing domain. The polypeptide is Alanine--tRNA ligase (Xanthomonas campestris pv. campestris (strain ATCC 33913 / DSM 3586 / NCPPB 528 / LMG 568 / P 25)).